A 158-amino-acid polypeptide reads, in one-letter code: Glutamyl-tRNA(Gln) amidotransferase subunit C, mitochondrial (158 aa).

The protein belongs to the GatC family. Subunit of the heterotrimeric GatCAB amidotransferase (AdT) complex, composed of A, B and C subunits.

The protein localises to the mitochondrion. It catalyses the reaction L-glutamyl-tRNA(Gln) + L-glutamine + ATP + H2O = L-glutaminyl-tRNA(Gln) + L-glutamate + ADP + phosphate + H(+). Functionally, allows the formation of correctly charged Gln-tRNA(Gln) through the transamidation of misacylated Glu-tRNA(Gln) in the mitochondria. The reaction takes place in the presence of glutamine and ATP through an activated gamma-phospho-Glu-tRNA(Gln). In Drosophila grimshawi (Hawaiian fruit fly), this protein is Glutamyl-tRNA(Gln) amidotransferase subunit C, mitochondrial.